Reading from the N-terminus, the 324-residue chain is Glyoxylate/hydroxypyruvate reductase B (324 aa).

Active-site residues include arginine 237 and glutamate 266. Histidine 285 acts as the Proton donor in catalysis.

It belongs to the D-isomer specific 2-hydroxyacid dehydrogenase family. GhrB subfamily. As to quaternary structure, homodimer.

The protein localises to the cytoplasm. It catalyses the reaction glycolate + NADP(+) = glyoxylate + NADPH + H(+). It carries out the reaction (R)-glycerate + NAD(+) = 3-hydroxypyruvate + NADH + H(+). The enzyme catalyses (R)-glycerate + NADP(+) = 3-hydroxypyruvate + NADPH + H(+). Functionally, catalyzes the NADPH-dependent reduction of glyoxylate and hydroxypyruvate into glycolate and glycerate, respectively. This is Glyoxylate/hydroxypyruvate reductase B from Shigella flexneri serotype 5b (strain 8401).